A 202-amino-acid chain; its full sequence is uncharacterized protein (202 aa).

The disordered stretch occupies residues 179 to 202 (FDEQDSTPELPPNYLLDSQKKSQG).

This is an uncharacterized protein from Haemophilus influenzae (strain ATCC 51907 / DSM 11121 / KW20 / Rd).